A 442-amino-acid chain; its full sequence is Glutamyl-tRNA reductase (442 aa).

Residues 50-53 (TCNR), Ser109, 114-116 (EPQ), and Gln120 each bind substrate. Catalysis depends on Cys51, which acts as the Nucleophile. 189–194 (GAGEMA) contacts NADP(+).

Belongs to the glutamyl-tRNA reductase family. Homodimer.

It carries out the reaction (S)-4-amino-5-oxopentanoate + tRNA(Glu) + NADP(+) = L-glutamyl-tRNA(Glu) + NADPH + H(+). The protein operates within porphyrin-containing compound metabolism; protoporphyrin-IX biosynthesis; 5-aminolevulinate from L-glutamyl-tRNA(Glu): step 1/2. Its function is as follows. Catalyzes the NADPH-dependent reduction of glutamyl-tRNA(Glu) to glutamate 1-semialdehyde (GSA). This chain is Glutamyl-tRNA reductase, found in Nitratidesulfovibrio vulgaris (strain DSM 19637 / Miyazaki F) (Desulfovibrio vulgaris).